Consider the following 229-residue polypeptide: Cytochrome c oxidase subunit 2 (229 aa).

Residues 1–26 are Mitochondrial intermembrane-facing; that stretch reads MSTWANLGLQDSASPLMEQLIFFHDH. A helical transmembrane segment spans residues 27-48; sequence ALLILVMITILVGYLMFMLFFN. The Mitochondrial matrix segment spans residues 49–62; the sequence is SYINRFLLHGQLIE. The helical transmembrane segment at 63–82 threads the bilayer; sequence MIWTILPAIILLFIAMPSLR. At 83–229 the chain is on the mitochondrial intermembrane side; the sequence is LLYLLDEINE…IKWIASKVNS (147 aa). Residues His-161, Cys-196, Glu-198, Cys-200, His-204, and Met-207 each coordinate Cu cation. Mg(2+) is bound at residue Glu-198.

Belongs to the cytochrome c oxidase subunit 2 family. As to quaternary structure, component of the cytochrome c oxidase (complex IV, CIV), a multisubunit enzyme composed of a catalytic core of 3 subunits and several supernumerary subunits. The complex exists as a monomer or a dimer and forms supercomplexes (SCs) in the inner mitochondrial membrane with ubiquinol-cytochrome c oxidoreductase (cytochrome b-c1 complex, complex III, CIII). Cu cation is required as a cofactor.

Its subcellular location is the mitochondrion inner membrane. It catalyses the reaction 4 Fe(II)-[cytochrome c] + O2 + 8 H(+)(in) = 4 Fe(III)-[cytochrome c] + 2 H2O + 4 H(+)(out). Component of the cytochrome c oxidase, the last enzyme in the mitochondrial electron transport chain which drives oxidative phosphorylation. The respiratory chain contains 3 multisubunit complexes succinate dehydrogenase (complex II, CII), ubiquinol-cytochrome c oxidoreductase (cytochrome b-c1 complex, complex III, CIII) and cytochrome c oxidase (complex IV, CIV), that cooperate to transfer electrons derived from NADH and succinate to molecular oxygen, creating an electrochemical gradient over the inner membrane that drives transmembrane transport and the ATP synthase. Cytochrome c oxidase is the component of the respiratory chain that catalyzes the reduction of oxygen to water. Electrons originating from reduced cytochrome c in the intermembrane space (IMS) are transferred via the dinuclear copper A center (CU(A)) of subunit 2 and heme A of subunit 1 to the active site in subunit 1, a binuclear center (BNC) formed by heme A3 and copper B (CU(B)). The BNC reduces molecular oxygen to 2 water molecules using 4 electrons from cytochrome c in the IMS and 4 protons from the mitochondrial matrix. This is Cytochrome c oxidase subunit 2 (mt:CoII) from Drosophila bifasciata (Fruit fly).